The primary structure comprises 375 residues: Enoyl-[acyl-carrier-protein] reductase, mitochondrial (375 aa).

A mitochondrion-targeting transit peptide spans 1-37 (MAALMESVVGRALKFSSTANFRSIRRGETPTLCIKSF). Catalysis depends on tyrosine 96, which acts as the Proton donor. NADP(+) contacts are provided by residues asparagine 169, 195 to 198 (TSIV), 218 to 220 (RDR), 287 to 290 (YGGM), 312 to 314 (FWL), and lysine 370.

Belongs to the zinc-containing alcohol dehydrogenase family. Quinone oxidoreductase subfamily. As to quaternary structure, homodimer.

It is found in the mitochondrion. It carries out the reaction a 2,3-saturated acyl-[ACP] + NADP(+) = a (2E)-enoyl-[ACP] + NADPH + H(+). In terms of biological role, catalyzes the NADPH-dependent reduction of trans-2-enoyl thioesters in mitochondrial fatty acid synthesis (fatty acid synthesis type II). Fatty acid chain elongation in mitochondria uses acyl carrier protein (ACP) as an acyl group carrier, but the enzyme accepts both ACP and CoA thioesters as substrates in vitro. This Arabidopsis thaliana (Mouse-ear cress) protein is Enoyl-[acyl-carrier-protein] reductase, mitochondrial.